A 38-amino-acid chain; its full sequence is Potassium channel toxin alpha-KTx 2.15 (38 aa).

3 disulfides stabilise this stretch: Cys7-Cys29, Cys13-Cys34, and Cys17-Cys36.

It belongs to the short scorpion toxin superfamily. Potassium channel inhibitor family. Alpha-KTx 02 subfamily. Expressed by the venom gland.

Its subcellular location is the secreted. In terms of biological role, blocks human voltage-gated potassium channels Kv1.2/KCNA2 (IC(50)=0.3 nM), Kv1.3/KCNA3 (IC(50)=8.3 nM) and Shaker IR (with inactivation domain removed) (IC(50)=12 nM) and blocks intermediate conductance calcium-activated potassium channel KCa3.1/KCNN4 (IC(50)=6.4 nM). This Centruroides tecomanus (Scorpion) protein is Potassium channel toxin alpha-KTx 2.15.